The primary structure comprises 101 residues: Movement protein (101 aa).

The chain crosses the membrane as a helical span at residues 30-50; it reads EVAILSFVALICIYLLYLWVL. Residues 80–101 form a disordered region; that stretch reads PIPNTLEPTAPVHPGPFVPGQG. The segment covering 90–101 has biased composition (pro residues); sequence PVHPGPFVPGQG.

Belongs to the mastrevirus movement protein family. Interacts with the capsid protein (CP). Part of a MP-CP-viral DNA complex.

Its subcellular location is the host membrane. In terms of biological role, involved in the viral transport within, and between cells. This chain is Movement protein, found in Avena sativa (Oat).